The chain runs to 249 residues: Transmembrane protein 150C (249 aa).

Residues 1–9 (MDGKKCSVW) are Cytoplasmic-facing. The helical transmembrane segment at 10–30 (MFLPLVFTLFTSAGLWIVYFI) threads the bilayer. Residues 31–64 (AVEDDKILPLNSAARKSGVKHAPYISFAGDDPPA) are Extracellular-facing. A helical membrane pass occupies residues 65–85 (SCVFSQVMNMAAFLALVVAVL). Residues 86-97 (RFIQLKPKVLNP) are Cytoplasmic-facing. A helical transmembrane segment spans residues 98 to 118 (WLNISGLVALCLASFGMTLLG). Over 119 to 130 (NFQLTNDEEIHN) the chain is Extracellular. The chain crosses the membrane as a helical span at residues 131–151 (VGTSLTFGFGTLTCWIQAALT). The Cytoplasmic segment spans residues 152–168 (LKVNIKNEGRRAGIPRV). The helical transmembrane segment at 169–189 (ILSAVITLCVVLYFILMAQDI) threads the bilayer. Residues 190-192 (HMY) are Extracellular-facing. Residues 193-213 (AARVQWGLVMCFLAYFGTLAV) traverse the membrane as a helical segment. At 214–249 (EFRHYRYEIVCSEYQENFLSFSESLSEASEYQTDQV) the chain is on the cytoplasmic side.

The protein belongs to the DRAM/TMEM150 family.

Its subcellular location is the cell membrane. It is found in the lysosome membrane. It catalyses the reaction Ca(2+)(in) = Ca(2+)(out). The enzyme catalyses Na(+)(in) = Na(+)(out). The catalysed reaction is K(+)(in) = K(+)(out). It carries out the reaction Mg(2+)(in) = Mg(2+)(out). In terms of biological role, nonselective cationic channel with high permeability to Ca(2+). Component of a mechanosensitive cation channel. Confers mechanically activated (MA) currents with slow inactivation kinetics. May contribute to proprioception. This Rattus norvegicus (Rat) protein is Transmembrane protein 150C (Tmem150c).